A 245-amino-acid chain; its full sequence is 1-(5-phosphoribosyl)-5-[(5-phosphoribosylamino)methylideneamino] imidazole-4-carboxamide isomerase (245 aa).

Residue Asp7 is the Proton acceptor of the active site. Asp129 serves as the catalytic Proton donor.

The protein belongs to the HisA/HisF family.

Its subcellular location is the cytoplasm. The enzyme catalyses 1-(5-phospho-beta-D-ribosyl)-5-[(5-phospho-beta-D-ribosylamino)methylideneamino]imidazole-4-carboxamide = 5-[(5-phospho-1-deoxy-D-ribulos-1-ylimino)methylamino]-1-(5-phospho-beta-D-ribosyl)imidazole-4-carboxamide. It participates in amino-acid biosynthesis; L-histidine biosynthesis; L-histidine from 5-phospho-alpha-D-ribose 1-diphosphate: step 4/9. The protein is 1-(5-phosphoribosyl)-5-[(5-phosphoribosylamino)methylideneamino] imidazole-4-carboxamide isomerase of Shewanella piezotolerans (strain WP3 / JCM 13877).